We begin with the raw amino-acid sequence, 334 residues long: Aspartate carbamoyltransferase catalytic subunit (334 aa).

Carbamoyl phosphate contacts are provided by Arg71 and Thr72. Lys99 serves as a coordination point for L-aspartate. Carbamoyl phosphate contacts are provided by Arg121, His151, and Gln154. Positions 184 and 239 each coordinate L-aspartate. Residues Gly280 and Pro281 each coordinate carbamoyl phosphate.

This sequence belongs to the aspartate/ornithine carbamoyltransferase superfamily. ATCase family. In terms of assembly, heterododecamer (2C3:3R2) of six catalytic PyrB chains organized as two trimers (C3), and six regulatory PyrI chains organized as three dimers (R2).

The catalysed reaction is carbamoyl phosphate + L-aspartate = N-carbamoyl-L-aspartate + phosphate + H(+). It functions in the pathway pyrimidine metabolism; UMP biosynthesis via de novo pathway; (S)-dihydroorotate from bicarbonate: step 2/3. Functionally, catalyzes the condensation of carbamoyl phosphate and aspartate to form carbamoyl aspartate and inorganic phosphate, the committed step in the de novo pyrimidine nucleotide biosynthesis pathway. The chain is Aspartate carbamoyltransferase catalytic subunit from Pseudomonas putida (strain ATCC 47054 / DSM 6125 / CFBP 8728 / NCIMB 11950 / KT2440).